The primary structure comprises 847 residues: DNA mismatch repair protein MutS (847 aa).

603 to 610 (GPNMSGKS) lines the ATP pocket.

It belongs to the DNA mismatch repair MutS family.

In terms of biological role, this protein is involved in the repair of mismatches in DNA. It is possible that it carries out the mismatch recognition step. This protein has a weak ATPase activity. The chain is DNA mismatch repair protein MutS from Streptococcus suis (strain 98HAH33).